Consider the following 121-residue polypeptide: Fluoride-specific ion channel FluC 2 (121 aa).

A run of 4 helical transmembrane segments spans residues 3-23 (YLFVFIGGLFGALLRYVLSTL), 27-47 (SGLPLGTLIANIVGAFLMGYL), 64-84 (GVTTGLLGALTTFSTFQFELV), and 92-112 (IALLFIYGLTSYIGGILFCWF). Residues G71 and T74 each contribute to the Na(+) site.

The protein belongs to the fluoride channel Fluc/FEX (TC 1.A.43) family.

Its subcellular location is the cell membrane. The catalysed reaction is fluoride(in) = fluoride(out). With respect to regulation, na(+) is not transported, but it plays an essential structural role and its presence is essential for fluoride channel function. Its function is as follows. Fluoride-specific ion channel. Important for reducing fluoride concentration in the cell, thus reducing its toxicity. In Staphylococcus haemolyticus (strain JCSC1435), this protein is Fluoride-specific ion channel FluC 2.